The primary structure comprises 1977 residues: Voltage-dependent L-type calcium channel subunit alpha-1F (1977 aa).

A compositionally biased stretch (basic and acidic residues) spans 1–11 (MSESEGGKDTT). Positions 1–60 (MSESEGGKDTTPEPSPANGAGPGPEWGLCPGPPAVEGESSGASGLGTPKRRNQHSKHKTV) are disordered. Residues 1 to 92 (MSESEGGKDT…RSCISIVEWK (92 aa)) lie on the Cytoplasmic side of the membrane. Basic residues predominate over residues 48-59 (PKRRNQHSKHKT). The I repeat unit spans residues 79-375 (NPLRRSCISI…LVLGVLSGEF (297 aa)). The helical transmembrane segment at 93 to 111 (PFDILILLTIFANCVALGV) threads the bilayer. The Extracellular segment spans residues 112 to 129 (YIPFPEDDSNTANHNLEQ). Residues 130–149 (VEYVFLVIFTVETVLKIVAY) traverse the membrane as a helical segment. The Cytoplasmic portion of the chain corresponds to 150 to 161 (GLVLHPSAYIRN). Residues 162–180 (GWNLLDFIIVVVGLFSVLL) traverse the membrane as a helical segment. Residues 181 to 201 (EQGPGRPGDAPHTGGKPGGFD) lie on the Extracellular side of the membrane. Residues 202 to 220 (VKALRAFRVLRPLRLVSGV) form a helical membrane-spanning segment. The Cytoplasmic segment spans residues 221 to 239 (PSLHIVLNSIMKALVPLLH). A helical membrane pass occupies residues 240–259 (IALLVLFVIIIYAIIGLELF). The Extracellular segment spans residues 260 to 347 (LGRMHKTCYF…WMQDAMGYEL (88 aa)). N-linked (GlcNAc...) asparagine glycosylation occurs at Asn-295. Glu-330 is a Ca(2+) binding site. The chain crosses the membrane as a helical span at residues 348-372 (PWVYFVSLVIFGSFFVLNLVLGVLS). The Cytoplasmic portion of the chain corresponds to 373 to 529 (GEFSKEREKA…ARCRRAVKSN (157 aa)). The binding to the beta subunit stretch occupies residues 395 to 412 (QQMEEDLRGYLDWITQAE). Disordered stretches follow at residues 418–441 (DPSA…PQLA) and 455–488 (SHST…EDEE). Residues 455–469 (SHSTRSTHSTSSHAS) are compositionally biased toward low complexity. An II repeat occupies 515–761 (NRVLRARCRR…VFLAIAVDNL (247 aa)). A helical transmembrane segment spans residues 530 to 549 (ACYWAVLLLVFLNTLTIASE). Topologically, residues 550–564 (HHGQPVWLTQIQEYA) are extracellular. A helical transmembrane segment spans residues 565 to 583 (NKVLLCLFTVEMLLKLYGL). Residues 584–591 (GPSAYVSS) lie on the Cytoplasmic side of the membrane. The helical transmembrane segment at 592 to 610 (FFNRFDCFVVCGGILETTL) threads the bilayer. The Extracellular portion of the chain corresponds to 611–620 (VEVGAMQPLG). The helical transmembrane segment at 621-639 (ISVLRCVRLLRIFKVTRHW) threads the bilayer. Over 640–658 (ASLSNLVASLLNSMKSIAS) the chain is Cytoplasmic. A helical membrane pass occupies residues 659–679 (LLLLLFLFIIIFSLLGMQLFG). The Extracellular segment spans residues 680–733 (GKFNFDQTHTKRSTFDTFPQALLTVFQILTGEDWNVVMYDGIMAYGGPFFPGML). Glu-711 serves as a coordination point for Ca(2+). A helical membrane pass occupies residues 734–758 (VCIYFIILFICGNYILLNVFLAIAV). The Cytoplasmic portion of the chain corresponds to 759–871 (DNLASGDAGT…KGCHTLIHHH (113 aa)). The disordered stretch occupies residues 767 to 830 (GTAKDKGGEK…EEEEEGAGGV (64 aa)). Positions 768-783 (TAKDKGGEKSNEKDLP) are enriched in basic and acidic residues. Acidic residues predominate over residues 807-826 (DMEEEEEEEEEEEEEEEEEG). The stretch at 858 to 1140 (NPLRKGCHTL…IFVGFVIITF (283 aa)) is one III repeat. A helical transmembrane segment spans residues 872-890 (VFTNLILVFIILSSVSLAA). The Extracellular portion of the chain corresponds to 891-906 (EDPIRAHSFRNHILGY). The chain crosses the membrane as a helical span at residues 907–926 (FDYAFTSIFTVEILLKMTVF). The Cytoplasmic portion of the chain corresponds to 927–938 (GAFLHRGSFCRS). A helical membrane pass occupies residues 939–957 (WFNMLDLLVVSVSLISFGI). Residues 958–963 (HSSAIS) are Extracellular-facing. A helical transmembrane segment spans residues 964-983 (VVKILRVLRVLRPLRAINRA). The Cytoplasmic portion of the chain corresponds to 984–1002 (KGLKHVVQCVFVAIRTIGN). A helical transmembrane segment spans residues 1003-1022 (IMIVTTLLQFMFACIGVQLF). The Extracellular portion of the chain corresponds to 1023 to 1112 (KGKFYTCTDE…HGPIYNYRVE (90 aa)). A dihydropyridine binding region spans residues 1060 to 1150 (RLWVNSDFNF…RAQGEQEYQN (91 aa)). Glu-1086 is a binding site for Ca(2+). A helical membrane pass occupies residues 1113–1133 (ISVFFIVYIIIIAFFMMNIFV). Topologically, residues 1134–1190 (GFVIITFRAQGEQEYQNCELDKNQRQCVEYALKAQPLRRYIPKNPHQYRVWATVNSA) are cytoplasmic. The stretch at 1177 to 1444 (NPHQYRVWAT…LFVAVIMDNF (268 aa)) is one IV repeat. A helical transmembrane segment spans residues 1191 to 1209 (AFEYLMFLLILLNTVALAM). At 1210 to 1224 (QHYEQTAPFNYAMDI) the chain is on the extracellular side. The chain crosses the membrane as a helical span at residues 1225–1244 (LNMVFTGLFTIEMVLKIIAF). Residues 1245 to 1251 (KPKHYFT) lie on the Cytoplasmic side of the membrane. The helical transmembrane segment at 1252–1273 (DAWNTFDALIVVGSIVDIAVTE) threads the bilayer. Residues 1274-1290 (VNNGGHLGESSEDSSRI) are Extracellular-facing. Residues 1291-1310 (SITFFRLFRVMRLVKLLSKG) traverse the membrane as a helical segment. Residues 1311-1329 (EGIRTLLWTFIKSFQALPY) are Cytoplasmic-facing. A helical transmembrane segment spans residues 1330-1349 (VALLIAMIFFIYAVIGMQMF). Residues 1350–1416 (GKVALQDGTQ…GEEFTCGSNF (67 aa)) are Extracellular-facing. Positions 1397 to 1463 (RCDPESDFGP…LGPHHLDEFK (67 aa)) are dihydropyridine binding. The tract at residues 1409 to 1452 (EFTCGSNFAIAYFISFFMLCAFLIINLFVAVIMDNFDYLTRDWS) is phenylalkylamine binding. Residues 1417–1441 (AIAYFISFFMLCAFLIINLFVAVIM) form a helical membrane-spanning segment. Residues 1442–1977 (DNFDYLTRDW…GDEMACVHAL (536 aa)) are Cytoplasmic-facing. Disordered stretches follow at residues 1637–1754 (CDTE…EVPD) and 1816–1841 (DLPI…WATP). Over residues 1638–1657 (DTEEEEEEGQEGVEEEDEKD) the composition is skewed to acidic residues. 4 stretches are compositionally biased toward polar residues: residues 1661–1670 (NKATMVSQPS), 1702–1716 (TPTS…AGSN), 1733–1743 (GNSQPKGTKGQ), and 1829–1840 (SGPNRAQGSWAT).

This sequence belongs to the calcium channel alpha-1 subunit (TC 1.A.1.11) family. CACNA1F subfamily. In terms of assembly, voltage-dependent calcium channels are multisubunit complexes, consisting of alpha-1, alpha-2, beta and delta subunits in a 1:1:1:1 ratio. The channel activity is directed by the pore-forming and voltage-sensitive alpha-1 subunit. In many cases, this subunit is sufficient to generate voltage-sensitive calcium channel activity. The auxiliary subunits beta and alpha-2/delta linked by a disulfide bridge regulate the channel activity. Interacts (via IQ domain) with CABP4; in a calcium independent manner. Interacts with CABP4; suppresses robust calcium-dependent inactivation of channel without enhancing the hyperpolarized voltage-dependent activation. Expression in skeletal muscle and retina. Isoform 4 is expressed in retina.

It is found in the membrane. It catalyses the reaction Ca(2+)(in) = Ca(2+)(out). In terms of biological role, voltage-sensitive calcium channels (VSCC) mediate the entry of calcium ions into excitable cells and are also involved in a variety of calcium-dependent processes, including muscle contraction, hormone or neurotransmitter release, gene expression, cell motility, cell division and cell death. The isoform alpha-1F gives rise to L-type calcium currents. Long-lasting (L-type) calcium channels belong to the 'high-voltage activated' (HVA) group. They are blocked by dihydropyridines (DHP), phenylalkylamines, and by benzothiazepines. Activates at more negative voltages and does not undergo calcium-dependent inactivation (CDI), due to incoming calcium ions, during depolarization. Voltage-dependent L-type calcium channel activates at more hyperpolarized voltages and exhibits a robust calcium-dependent inactivation (CDI), due to incoming calcium ions, during depolarizations. Its function is as follows. Voltage-sensitive calcium channels (VSCC) mediate the entry of calcium ions into excitable cells and are also involved in a variety of calcium-dependent processes, including muscle contraction, hormone or neurotransmitter release, gene expression, cell motility, cell division and cell death. The protein is Voltage-dependent L-type calcium channel subunit alpha-1F of Homo sapiens (Human).